The following is a 139-amino-acid chain: Cystatin-1 (139 aa).

Positions 1–22 (MHSRLPVPASLCLLLLLPSVLP) are cleaved as a signal peptide. A Cystatin domain is found at 27–127 (GGLSPRDVTD…CHFEVWSRPW (101 aa)). The Secondary area of contact motif lies at 71–75 (QVVSG). 2 disulfides stabilise this stretch: cysteine 89–cysteine 105 and cysteine 118–cysteine 138.

This sequence belongs to the cystatin family. Expressed by the venom gland.

It is found in the secreted. Inhibits various C1 cysteine proteases including cathepsin L, papain and cathepsin B. This protein has no toxic activity and its function in the venom is unknown. It may play a role as housekeeping or regulatory protein. In Crotalus adamanteus (Eastern diamondback rattlesnake), this protein is Cystatin-1.